The primary structure comprises 343 residues: L-threonine 3-dehydrogenase (343 aa).

Cys40 serves as a coordination point for Zn(2+). Active-site charge relay system residues include Thr42 and His45. The Zn(2+) site is built by His65, Glu66, Cys95, Cys98, Cys101, and Cys109. Residues Ile177, Asp197, Arg202, 264–266 (LGI), and 288–289 (IY) contribute to the NAD(+) site.

This sequence belongs to the zinc-containing alcohol dehydrogenase family. In terms of assembly, homotetramer. It depends on Zn(2+) as a cofactor.

Its subcellular location is the cytoplasm. It catalyses the reaction L-threonine + NAD(+) = (2S)-2-amino-3-oxobutanoate + NADH + H(+). It participates in amino-acid degradation; L-threonine degradation via oxydo-reductase pathway; glycine from L-threonine: step 1/2. Functionally, catalyzes the NAD(+)-dependent oxidation of L-threonine to 2-amino-3-ketobutyrate. The sequence is that of L-threonine 3-dehydrogenase from Aliivibrio fischeri (strain MJ11) (Vibrio fischeri).